A 523-amino-acid polypeptide reads, in one-letter code: MRDTVDPVFSLGISSLWDELRHMPTGGVWWVNADRQQDAISLVNQTIASQTENANVAVIGMEGDPGKVIKLDESHGPEKIRLFTMPASEKGLYSLPHDLLCSVNPTHYFFILICANNTWRNITSESLHKWLEKMNKWTRFHHCSLLVINPCNNSDKQSSLLMGEYRSLFGLASLRFQGDQHLFDIAFWCNEKGVSARQQLLLCQQDERWTLSHQEETAIQPRSDEKRILSHVAVLEGAPPLSEHWTLFDNNEALFNDARTAQAATIIFSLTQNNQIEPLARRIHTLRRQRGSALKIVVRENIASLRATDERLLLGCGANMIIPWNAPLSRCLTLIESVQGQQFSRYVPEDITTLLSMTQPLKLRGFQPWDTFCDAIHTMMSNTLLPADGKGVLVALRPVPGIRVEQALTLCRPNRTGDIMTIGGNRLVLFLSFCRVNDLDTALNHIFPLPTGDIFSNRMVWFEDKQISAELVQMRLLSPELWGTPLPLAKRADPVINAEHDGRIWRRIPEPLRLLDDTAERAS.

Belongs to the BcsE family.

Required for cellulose biosynthesis. May have protease activity, but BcsA is not targeted. Binds bis-(3'-5') cyclic diguanylic acid (c-di-GMP). The protein is Cyclic di-GMP binding protein BcsE of Salmonella typhimurium (strain LT2 / SGSC1412 / ATCC 700720).